The chain runs to 1465 residues: Ankyrin and armadillo repeat-containing protein (1465 aa).

The chain crosses the membrane as a helical span at residues 313 to 329 (MGYLKLICFLIPFLLSL). 5 ANK repeats span residues 532–561 (AGYA…NVNQ), 582–611 (NGPT…DYTL), 615–644 (RGWM…SLLE), 651–680 (NQCT…NWRK), and 684–714 (KGNN…ELPV). ARM repeat units lie at residues 745 to 784 (DRYW…NIST), 786 to 825 (VSIV…DVAK), 827 to 865 (ENKD…VLCM), 868 to 907 (ESNQ…EVAR), 910 to 949 (KEVQ…SLAN), and 1085 to 1125 (PMSQ…CIVL). Positions 1431 to 1465 (KLGKDEQKANPDPPAFLNKLGKDEQNANPDPAESQ) are disordered.

It localises to the membrane. The sequence is that of Ankyrin and armadillo repeat-containing protein (Ankar) from Mus musculus (Mouse).